Consider the following 1036-residue polypeptide: uncharacterized protein (1036 aa).

An N-terminal signal peptide occupies residues 1–24 (MKRVGLIGVIMAALLVISATPVMA). A helical membrane pass occupies residues 1011-1033 (GGGVPGFEAVFAIAGLLAVAYLL).

The protein resides in the membrane. This is an uncharacterized protein from Archaeoglobus fulgidus (strain ATCC 49558 / DSM 4304 / JCM 9628 / NBRC 100126 / VC-16).